Reading from the N-terminus, the 274-residue chain is Kit ligand (274 aa).

A signal peptide spans 1–25; that stretch reads MKKTQTWIITCIYLQLLLFNPLVKT. Topologically, residues 26-215 are extracellular; sequence KGICGKRVTD…SNSIGDSNLQ (190 aa). 2 disulfide bridges follow: Cys-29–Cys-114 and Cys-68–Cys-164. N-linked (GlcNAc...) asparagine glycosylation is found at Asn-90, Asn-97, Asn-145, and Asn-196. Residues 216 to 238 traverse the membrane as a helical segment; the sequence is WAAMALPAFFSLVIGFAFGALYW. The Cytoplasmic segment spans residues 239–274; that stretch reads KKKQPNLTRTVENIQINEEDNEISMLQEKEREFQEV.

It belongs to the SCF family. In terms of assembly, homodimer, non-covalently linked. Post-translationally, a soluble form is produced by proteolytic processing of the extracellular domain.

It is found in the cytoplasm. The protein resides in the cytoskeleton. The protein localises to the cell membrane. Its subcellular location is the cell projection. It localises to the lamellipodium. It is found in the filopodium. The protein resides in the secreted. Stimulates the proliferation of mast cells. Able to augment the proliferation of both myeloid and lymphoid hematopoietic progenitors in bone marrow culture. Also mediates cell-cell adhesion. Acts synergistically with other cytokines, probably interleukins. The chain is Kit ligand (KITLG) from Canis lupus familiaris (Dog).